The sequence spans 319 residues: Acetyl-coenzyme A carboxylase carboxyl transferase subunit alpha (319 aa).

The 262-residue stretch at 35-296 (NIDEEVHRLR…KAQLLEDLAD (262 aa)) folds into the CoA carboxyltransferase C-terminal domain.

The protein belongs to the AccA family. As to quaternary structure, acetyl-CoA carboxylase is a heterohexamer composed of biotin carboxyl carrier protein (AccB), biotin carboxylase (AccC) and two subunits each of ACCase subunit alpha (AccA) and ACCase subunit beta (AccD).

It is found in the cytoplasm. The catalysed reaction is N(6)-carboxybiotinyl-L-lysyl-[protein] + acetyl-CoA = N(6)-biotinyl-L-lysyl-[protein] + malonyl-CoA. It participates in lipid metabolism; malonyl-CoA biosynthesis; malonyl-CoA from acetyl-CoA: step 1/1. Its function is as follows. Component of the acetyl coenzyme A carboxylase (ACC) complex. First, biotin carboxylase catalyzes the carboxylation of biotin on its carrier protein (BCCP) and then the CO(2) group is transferred by the carboxyltransferase to acetyl-CoA to form malonyl-CoA. The sequence is that of Acetyl-coenzyme A carboxylase carboxyl transferase subunit alpha from Salmonella agona (strain SL483).